A 266-amino-acid polypeptide reads, in one-letter code: Aquaporin TIP3-2 (266 aa).

2 helical membrane-spanning segments follow: residues 29–49 (AAISEFIATAIFVFAAEGSVL) and 66–86 (GLVAVALAHALGLAVAVAVAV). The NPA 1 motif lies at 94 to 96 (NPA). 3 helical membrane passes run 109–129 (LVRAVLYWAAQLLGAVAATLL), 153–173 (AVLLEAVMTFGFVYAYYATVV), and 180–200 (LGTIAPLAVGFLLGANVLAGG). Residues 208 to 210 (NPA) carry the NPA 2 motif. Residues 228-248 (YWLGPFLGAGLAGLVYEYLLI) traverse the membrane as a helical segment.

The protein belongs to the MIP/aquaporin (TC 1.A.8) family. TIP (TC 1.A.8.10) subfamily.

The protein localises to the vacuole membrane. Functionally, aquaporins facilitate the transport of water and small neutral solutes across cell membranes. The sequence is that of Aquaporin TIP3-2 (TIP3-2) from Zea mays (Maize).